The chain runs to 426 residues: Tol-Pal system protein TolB (426 aa).

An N-terminal signal peptide occupies residues 1–25 (MNILLSRFRLLLAAALAALSWGAQA).

Belongs to the TolB family. As to quaternary structure, the Tol-Pal system is composed of five core proteins: the inner membrane proteins TolA, TolQ and TolR, the periplasmic protein TolB and the outer membrane protein Pal. They form a network linking the inner and outer membranes and the peptidoglycan layer.

It localises to the periplasm. Part of the Tol-Pal system, which plays a role in outer membrane invagination during cell division and is important for maintaining outer membrane integrity. The sequence is that of Tol-Pal system protein TolB from Aromatoleum aromaticum (strain DSM 19018 / LMG 30748 / EbN1) (Azoarcus sp. (strain EbN1)).